The chain runs to 248 residues: Phosphatidylglycerol--prolipoprotein diacylglyceryl transferase (248 aa).

The next 3 helical transmembrane spans lie at 6-26 (FTLF…GMIL), 47-67 (NIAI…YVVF), and 84-104 (GGGL…YIYT). Residue Arg-130 participates in a 1,2-diacyl-sn-glycero-3-phospho-(1'-sn-glycerol) binding. 2 helical membrane passes run 186–206 (GQVI…IEGL) and 218–238 (MAQV…VYLS).

Belongs to the Lgt family.

The protein localises to the cell membrane. It carries out the reaction L-cysteinyl-[prolipoprotein] + a 1,2-diacyl-sn-glycero-3-phospho-(1'-sn-glycerol) = an S-1,2-diacyl-sn-glyceryl-L-cysteinyl-[prolipoprotein] + sn-glycerol 1-phosphate + H(+). Its pathway is protein modification; lipoprotein biosynthesis (diacylglyceryl transfer). Catalyzes the transfer of the diacylglyceryl group from phosphatidylglycerol to the sulfhydryl group of the N-terminal cysteine of a prolipoprotein, the first step in the formation of mature lipoproteins. The sequence is that of Phosphatidylglycerol--prolipoprotein diacylglyceryl transferase from Clostridioides difficile (strain 630) (Peptoclostridium difficile).